Reading from the N-terminus, the 184-residue chain is 2-C-methyl-D-erythritol 2,4-cyclodiphosphate synthase (184 aa).

2 residues coordinate a divalent metal cation: aspartate 17 and histidine 19. Residues 17–19 (DVH) and 47–48 (HS) contribute to the 4-CDP-2-C-methyl-D-erythritol 2-phosphate site. Residue histidine 55 coordinates a divalent metal cation. 4-CDP-2-C-methyl-D-erythritol 2-phosphate-binding positions include 74 to 78 (FPNTD), phenylalanine 152, and arginine 155.

It belongs to the IspF family. In terms of assembly, homotrimer. It depends on a divalent metal cation as a cofactor.

It catalyses the reaction 4-CDP-2-C-methyl-D-erythritol 2-phosphate = 2-C-methyl-D-erythritol 2,4-cyclic diphosphate + CMP. The protein operates within isoprenoid biosynthesis; isopentenyl diphosphate biosynthesis via DXP pathway; isopentenyl diphosphate from 1-deoxy-D-xylulose 5-phosphate: step 4/6. In terms of biological role, involved in the biosynthesis of isopentenyl diphosphate (IPP) and dimethylallyl diphosphate (DMAPP), two major building blocks of isoprenoid compounds. Catalyzes the conversion of 4-diphosphocytidyl-2-C-methyl-D-erythritol 2-phosphate (CDP-ME2P) to 2-C-methyl-D-erythritol 2,4-cyclodiphosphate (ME-CPP) with a corresponding release of cytidine 5-monophosphate (CMP). The polypeptide is 2-C-methyl-D-erythritol 2,4-cyclodiphosphate synthase (Anaplasma marginale (strain St. Maries)).